The primary structure comprises 303 residues: Cysteine synthase B (303 aa).

At Lys-41 the chain carries N6-(pyridoxal phosphate)lysine. Residues Asn-71, 174-178 (GTTGT), and Ser-255 each bind pyridoxal 5'-phosphate.

It belongs to the cysteine synthase/cystathionine beta-synthase family. Requires pyridoxal 5'-phosphate as cofactor.

It carries out the reaction O-acetyl-L-serine + hydrogen sulfide = L-cysteine + acetate. Its pathway is amino-acid biosynthesis; L-cysteine biosynthesis; L-cysteine from L-serine: step 2/2. Two cysteine synthase enzymes are found. Both catalyze the same reaction. Cysteine synthase B can also use thiosulfate in place of sulfide to give cysteine thiosulfonate as a product. This is Cysteine synthase B (cysM) from Salmonella typhimurium (strain LT2 / SGSC1412 / ATCC 700720).